Here is a 505-residue protein sequence, read N- to C-terminus: ATP synthase subunit beta (505 aa).

Position 157–164 (157–164 (GGAGVGKT)) interacts with ATP.

It belongs to the ATPase alpha/beta chains family. In terms of assembly, F-type ATPases have 2 components, CF(1) - the catalytic core - and CF(0) - the membrane proton channel. CF(1) has five subunits: alpha(3), beta(3), gamma(1), delta(1), epsilon(1). CF(0) has three main subunits: a(1), b(2) and c(9-12). The alpha and beta chains form an alternating ring which encloses part of the gamma chain. CF(1) is attached to CF(0) by a central stalk formed by the gamma and epsilon chains, while a peripheral stalk is formed by the delta and b chains.

The protein localises to the cell inner membrane. The enzyme catalyses ATP + H2O + 4 H(+)(in) = ADP + phosphate + 5 H(+)(out). Functionally, produces ATP from ADP in the presence of a proton gradient across the membrane. The catalytic sites are hosted primarily by the beta subunits. The sequence is that of ATP synthase subunit beta from Bacteroides thetaiotaomicron (strain ATCC 29148 / DSM 2079 / JCM 5827 / CCUG 10774 / NCTC 10582 / VPI-5482 / E50).